The primary structure comprises 338 residues: Lipoate-protein ligase A (338 aa).

A BPL/LPL catalytic domain is found at 29-216 (PATQRVLFLW…AFFAYYGERV (188 aa)). ATP is bound by residues Arg-71, 76 to 79 (GAVF), and Lys-134. A (R)-lipoate-binding site is contributed by Lys-134.

The protein belongs to the LplA family. In terms of assembly, monomer.

The protein resides in the cytoplasm. It catalyses the reaction L-lysyl-[lipoyl-carrier protein] + (R)-lipoate + ATP = N(6)-[(R)-lipoyl]-L-lysyl-[lipoyl-carrier protein] + AMP + diphosphate + H(+). It functions in the pathway protein modification; protein lipoylation via exogenous pathway; protein N(6)-(lipoyl)lysine from lipoate: step 1/2. Its pathway is protein modification; protein lipoylation via exogenous pathway; protein N(6)-(lipoyl)lysine from lipoate: step 2/2. Functionally, catalyzes both the ATP-dependent activation of exogenously supplied lipoate to lipoyl-AMP and the transfer of the activated lipoyl onto the lipoyl domains of lipoate-dependent enzymes. This is Lipoate-protein ligase A from Cronobacter sakazakii (strain ATCC BAA-894) (Enterobacter sakazakii).